Consider the following 817-residue polypeptide: Leucine--tRNA ligase (817 aa).

A 'HIGH' region motif is present at residues Pro40–His50. The 'KMSKS' region signature appears at Lys578–Ser582. Lys581 is an ATP binding site.

The protein belongs to the class-I aminoacyl-tRNA synthetase family.

Its subcellular location is the cytoplasm. The enzyme catalyses tRNA(Leu) + L-leucine + ATP = L-leucyl-tRNA(Leu) + AMP + diphosphate. This chain is Leucine--tRNA ligase, found in Caldicellulosiruptor saccharolyticus (strain ATCC 43494 / DSM 8903 / Tp8T 6331).